We begin with the raw amino-acid sequence, 249 residues long: Phosphate import ATP-binding protein PstB 2 (249 aa).

An ABC transporter domain is found at 4 to 244 (IEVRDLDLFY…PKDKRTEDYI (241 aa)). 36–43 (GPSGCGKS) is an ATP binding site.

Belongs to the ABC transporter superfamily. Phosphate importer (TC 3.A.1.7) family. As to quaternary structure, the complex is composed of two ATP-binding proteins (PstB), two transmembrane proteins (PstC and PstA) and a solute-binding protein (PstS).

The protein resides in the cell membrane. The catalysed reaction is phosphate(out) + ATP + H2O = ADP + 2 phosphate(in) + H(+). In terms of biological role, part of the ABC transporter complex PstSACB involved in phosphate import. Responsible for energy coupling to the transport system. This chain is Phosphate import ATP-binding protein PstB 2, found in Caldanaerobacter subterraneus subsp. tengcongensis (strain DSM 15242 / JCM 11007 / NBRC 100824 / MB4) (Thermoanaerobacter tengcongensis).